The following is a 459-amino-acid chain: FAD-dependent monooxygenase CTB5 (459 aa).

Positions Ser10–Gln187 constitute an FAD-binding PCMH-type domain.

Belongs to the oxygen-dependent FAD-linked oxidoreductase family.

The protein operates within mycotoxin biosynthesis. FAD-dependent monooxygenase; part of the gene cluster that mediates the biosynthesis of cercosporin, a light-activated, non-host-selective toxin. The perylenequinone chromophore of cercosporin absorbs light energy to attain an electronically-activated triplet state and produces active oxygen species such as the hydroxyl radical, superoxide, hydrogen peroxide or singlet oxygen upon reaction with oxygen molecules. These reactive oxygen species cause damage to various cellular components including lipids, proteins and nucleic acids. The first step of cercosporin biosynthesis is performed by the polyketide synthase CTB1 which catalyzes the formation of nor-toralactone. The starter unit acyltransferase (SAT) domain of CTB1 initiates polyketide extension by the selective utilization of acetyl-CoA, which is elongated to the heptaketide in the beta-ketoacyl synthase (KS) domain by successive condensations with six malonyl units introduced by the malonyl acyltransferase (MAT) domain. The product template (PT) domain catalyzes C4-C9 and C2-C11 aldol cyclizations and dehydrations to a trihydroxynaphthalene, which is thought to be delivered to the thioesterase (TE) domain for product release. The bifunctional enzyme CTB3 then methylates nor-toralactone to toralactone before conducting an unusual oxidative aromatic ring opening. The O-methyltransferase CTB2 further methylates the nascent OH-6 of the CBT3 product, blocking further oxidation at this site before the reductase CTB6 reduces the 2-oxopropyl ketone at position C7, giving naphthalene. The FAD-dependent monooxygenase CTB5 in concert with the multicopper oxidase CTB12 are responsible for homodimerization of naphthalene with CTB7 installing the dioxepine moiety, finally producing cercosporin. The fasciclin domain-containing protein CTB11 might act with CTB5 and CTB12 whereas the roles of CTB9 and CTB10 have still to be elucidated. This chain is FAD-dependent monooxygenase CTB5, found in Cercospora nicotianae (Barn spot disease fungus).